We begin with the raw amino-acid sequence, 249 residues long: Voltage-gated potassium channel subunit beta-3 (249 aa).

Residues Asn-44, Ser-74, Arg-75, Gln-100, Trp-129, Ser-130, Pro-131, Leu-132, Ala-133, Cys-134, Lys-140, Lys-150, Gly-209, Ser-211, Gln-215, and Glu-218 each coordinate NADP(+).

The protein belongs to the shaker potassium channel beta subunit family. As to quaternary structure, forms heteromultimeric complex with alpha subunits. Interacts with KCNA5 and KCNB2. As to expression, strong expression in brain, with highest levels in neocortical and allocortical regions, hippocampus, olfactory bulb and cerebellum. Also strong in kidney. Weak expression in lung, skeletal muscle and heart.

It is found in the cytoplasm. Regulatory subunit of the voltage-gated potassium (Kv) channels composed of pore-forming and potassium-conducting alpha subunits and of regulatory beta subunit. The beta-3/KCNAB3 subunit may mediate closure of potassium channels. Enhances the expression of Kv2.2/KCNB2 alpha subunit-containing Kv channels but not Kv2.1/KCNB1. May display nicotinamide adenine dinucleotide phosphate (NADPH)-dependent aldoketoreductase activity. The binding of oxidized and reduced NADP(H) cofactors may be required for the regulation of potassium channel activity. In Mus musculus (Mouse), this protein is Voltage-gated potassium channel subunit beta-3.